We begin with the raw amino-acid sequence, 301 residues long: Uricase (301 aa).

Active-site charge relay system residues include lysine 11 and threonine 58. The urate site is built by threonine 58, aspartate 59, phenylalanine 160, arginine 177, valine 228, glutamine 229, and asparagine 255. The Charge relay system role is filled by histidine 257. Positions 299-301 match the Microbody targeting signal motif; that stretch reads AKL.

Belongs to the uricase family.

The protein resides in the peroxisome. The enzyme catalyses urate + O2 + H2O = 5-hydroxyisourate + H2O2. It functions in the pathway purine metabolism; urate degradation; (S)-allantoin from urate: step 1/3. Catalyzes the oxidation of uric acid to 5-hydroxyisourate, which is further processed to form (S)-allantoin. The chain is Uricase (uaZ) from Emericella nidulans (strain FGSC A4 / ATCC 38163 / CBS 112.46 / NRRL 194 / M139) (Aspergillus nidulans).